A 401-amino-acid chain; its full sequence is Tryptophan synthase beta chain (401 aa).

N6-(pyridoxal phosphate)lysine is present on K91.

This sequence belongs to the TrpB family. As to quaternary structure, tetramer of two alpha and two beta chains. It depends on pyridoxal 5'-phosphate as a cofactor.

It catalyses the reaction (1S,2R)-1-C-(indol-3-yl)glycerol 3-phosphate + L-serine = D-glyceraldehyde 3-phosphate + L-tryptophan + H2O. The protein operates within amino-acid biosynthesis; L-tryptophan biosynthesis; L-tryptophan from chorismate: step 5/5. Its function is as follows. The beta subunit is responsible for the synthesis of L-tryptophan from indole and L-serine. The chain is Tryptophan synthase beta chain from Lactococcus lactis subsp. cremoris (strain SK11).